The primary structure comprises 764 residues: 5-methyltetrahydropteroyltriglutamate--homocysteine methyltransferase (764 aa).

Residues 17–20 and Lys-117 each bind 5-methyltetrahydropteroyltri-L-glutamate; that span reads RELK. L-homocysteine is bound by residues 436 to 438 and Glu-489; that span reads IGS. L-methionine-binding positions include 436–438 and Glu-489; that span reads IGS. 5-methyltetrahydropteroyltri-L-glutamate contacts are provided by residues 520–521 and Trp-566; that span reads RC. Asp-604 serves as a coordination point for L-homocysteine. Asp-604 is a binding site for L-methionine. Glu-610 is a 5-methyltetrahydropteroyltri-L-glutamate binding site. Zn(2+) is bound by residues His-646, Cys-648, and Glu-670. Catalysis depends on His-699, which acts as the Proton donor. Residue Cys-731 coordinates Zn(2+).

This sequence belongs to the vitamin-B12 independent methionine synthase family. It depends on Zn(2+) as a cofactor.

It carries out the reaction 5-methyltetrahydropteroyltri-L-glutamate + L-homocysteine = tetrahydropteroyltri-L-glutamate + L-methionine. Its pathway is amino-acid biosynthesis; L-methionine biosynthesis via de novo pathway; L-methionine from L-homocysteine (MetE route): step 1/1. In terms of biological role, catalyzes the transfer of a methyl group from 5-methyltetrahydrofolate to homocysteine resulting in methionine formation. This Baumannia cicadellinicola subsp. Homalodisca coagulata protein is 5-methyltetrahydropteroyltriglutamate--homocysteine methyltransferase.